The chain runs to 167 residues: Phosphopantetheine adenylyltransferase (167 aa).

Ser-11 provides a ligand contact to substrate. Residues 11–12 (SF) and His-19 contribute to the ATP site. Positions 43, 76, and 90 each coordinate substrate. Residues 91 to 93 (GIR), Glu-101, and 126 to 132 (YDALSST) contribute to the ATP site.

The protein belongs to the bacterial CoaD family. Homohexamer. Requires Mg(2+) as cofactor.

Its subcellular location is the cytoplasm. The enzyme catalyses (R)-4'-phosphopantetheine + ATP + H(+) = 3'-dephospho-CoA + diphosphate. Its pathway is cofactor biosynthesis; coenzyme A biosynthesis; CoA from (R)-pantothenate: step 4/5. Its function is as follows. Reversibly transfers an adenylyl group from ATP to 4'-phosphopantetheine, yielding dephospho-CoA (dPCoA) and pyrophosphate. The chain is Phosphopantetheine adenylyltransferase from Lacticaseibacillus casei (strain BL23) (Lactobacillus casei).